Here is a 131-residue protein sequence, read N- to C-terminus: U-scoloptoxin-Er5e (131 aa).

Residues 1 to 22 (MKTNCEFPLLCLLIVLVANVEG) form the signal peptide. Residues 23–94 (EVEDNELKMV…KRLWRNWERR (72 aa)) constitute a propeptide that is removed on maturation. RLWRNWE repeat units follow at residues 34 to 40 (RLWRNWE), 61 to 67 (RLWRNWE), and 86 to 92 (RLWRNWE). Q95 carries the post-translational modification Pyrrolidone carboxylic acid. The RLWRNWE 4; approximate repeat unit spans residues 107–113 (ELWRNWE). Residues 112–131 (WEDLKRRQVVDLNDEQKTTG) constitute a propeptide that is removed on maturation.

The protein belongs to the scoloptoxin-08 family. As to expression, expressed by the venom gland.

It localises to the secreted. This Ethmostigmus rubripes (Giant centipede) protein is U-scoloptoxin-Er5e.